Consider the following 144-residue polypeptide: MTEVNINVTEIMEALPHRYPFLLVDRVIDIAEDEITAIKNVTINEEFFQGHFPQYPVMPGVLIMEALAQAAGVLELSKPENKGKLVFYAGMDNVKYKKQVTPGDKLVLHAKFIKRRGPIAVVEAEATVDGKLAAKGTLTFALGR.

His51 is an active-site residue.

It belongs to the thioester dehydratase family. FabZ subfamily.

Its subcellular location is the cytoplasm. The catalysed reaction is a (3R)-hydroxyacyl-[ACP] = a (2E)-enoyl-[ACP] + H2O. Its function is as follows. Involved in unsaturated fatty acids biosynthesis. Catalyzes the dehydration of short chain beta-hydroxyacyl-ACPs and long chain saturated and unsaturated beta-hydroxyacyl-ACPs. The sequence is that of 3-hydroxyacyl-[acyl-carrier-protein] dehydratase FabZ from Lactococcus lactis subsp. cremoris (strain MG1363).